The sequence spans 179 residues: Laminin-binding fimbrial subunit ElfA (179 aa).

An N-terminal signal peptide occupies residues 1–21 (MKKSVLTAFITVVCATSSVMA).

Belongs to the fimbrial protein family.

It localises to the fimbrium. Functionally, part of the elfADCG fimbrial operon, which could be required for adherence to host epithelial cells. ElfA is an accessory colonization factor that contributes to adherence of bacteria to human intestinal epithelial cells and to animal intestinal tissue in vitro. Binds specifically to laminin, but not to fibronectin or collagen type IV. This chain is Laminin-binding fimbrial subunit ElfA (elfA), found in Escherichia coli O157:H7.